We begin with the raw amino-acid sequence, 370 residues long: Queuine tRNA-ribosyltransferase (370 aa).

Asp89 (proton acceptor) is an active-site residue. Residues 89–93 (DSGGF), Asp143, and Gly214 each bind substrate. The segment at 245-251 (GVGKPED) is RNA binding. The Nucleophile role is filled by Asp264. Positions 269-273 (TRNAR) are RNA binding; important for wobble base 34 recognition. Zn(2+)-binding residues include Cys302, Cys304, Cys307, and His333.

The protein belongs to the queuine tRNA-ribosyltransferase family. Homodimer. Within each dimer, one monomer is responsible for RNA recognition and catalysis, while the other monomer binds to the replacement base PreQ1. Zn(2+) is required as a cofactor.

The catalysed reaction is 7-aminomethyl-7-carbaguanine + guanosine(34) in tRNA = 7-aminomethyl-7-carbaguanosine(34) in tRNA + guanine. It participates in tRNA modification; tRNA-queuosine biosynthesis. Its function is as follows. Catalyzes the base-exchange of a guanine (G) residue with the queuine precursor 7-aminomethyl-7-deazaguanine (PreQ1) at position 34 (anticodon wobble position) in tRNAs with GU(N) anticodons (tRNA-Asp, -Asn, -His and -Tyr). Catalysis occurs through a double-displacement mechanism. The nucleophile active site attacks the C1' of nucleotide 34 to detach the guanine base from the RNA, forming a covalent enzyme-RNA intermediate. The proton acceptor active site deprotonates the incoming PreQ1, allowing a nucleophilic attack on the C1' of the ribose to form the product. After dissociation, two additional enzymatic reactions on the tRNA convert PreQ1 to queuine (Q), resulting in the hypermodified nucleoside queuosine (7-(((4,5-cis-dihydroxy-2-cyclopenten-1-yl)amino)methyl)-7-deazaguanosine). The sequence is that of Queuine tRNA-ribosyltransferase from Buchnera aphidicola subsp. Acyrthosiphon pisum (strain 5A).